A 239-amino-acid polypeptide reads, in one-letter code: Small ribosomal subunit protein uS2c (239 aa).

Belongs to the universal ribosomal protein uS2 family.

The protein localises to the plastid. Its subcellular location is the organellar chromatophore. In Paulinella chromatophora, this protein is Small ribosomal subunit protein uS2c (rps2).